The chain runs to 211 residues: Redox-sensing transcriptional repressor Rex (211 aa).

Residues 17–56 (LYYRLVSILKGKGIDRVNSKTISEALQIDSATIRRDFSYF) constitute a DNA-binding region (H-T-H motif). 91–96 (GIGNLG) is a binding site for NAD(+).

It belongs to the transcriptional regulatory Rex family. As to quaternary structure, homodimer.

It localises to the cytoplasm. Its function is as follows. Modulates transcription in response to changes in cellular NADH/NAD(+) redox state. This is Redox-sensing transcriptional repressor Rex from Staphylococcus epidermidis (strain ATCC 12228 / FDA PCI 1200).